The following is a 291-amino-acid chain: ATP synthase gamma chain (291 aa).

The protein belongs to the ATPase gamma chain family. As to quaternary structure, F-type ATPases have 2 components, CF(1) - the catalytic core - and CF(0) - the membrane proton channel. CF(1) has five subunits: alpha(3), beta(3), gamma(1), delta(1), epsilon(1). CF(0) has three main subunits: a, b and c.

The protein resides in the cell inner membrane. Functionally, produces ATP from ADP in the presence of a proton gradient across the membrane. The gamma chain is believed to be important in regulating ATPase activity and the flow of protons through the CF(0) complex. The chain is ATP synthase gamma chain from Chlorobium phaeobacteroides (strain DSM 266 / SMG 266 / 2430).